Reading from the N-terminus, the 302-residue chain is tRNA-cytidine(32) 2-sulfurtransferase (302 aa).

The short motif at 45 to 50 (SGGKDS) is the PP-loop motif element. Cys120, Cys123, and Cys211 together coordinate [4Fe-4S] cluster.

Belongs to the TtcA family. In terms of assembly, homodimer. Requires Mg(2+) as cofactor. It depends on [4Fe-4S] cluster as a cofactor.

The protein localises to the cytoplasm. The catalysed reaction is cytidine(32) in tRNA + S-sulfanyl-L-cysteinyl-[cysteine desulfurase] + AH2 + ATP = 2-thiocytidine(32) in tRNA + L-cysteinyl-[cysteine desulfurase] + A + AMP + diphosphate + H(+). Its pathway is tRNA modification. Its function is as follows. Catalyzes the ATP-dependent 2-thiolation of cytidine in position 32 of tRNA, to form 2-thiocytidine (s(2)C32). The sulfur atoms are provided by the cysteine/cysteine desulfurase (IscS) system. The chain is tRNA-cytidine(32) 2-sulfurtransferase from Aeromonas salmonicida (strain A449).